A 169-amino-acid polypeptide reads, in one-letter code: Probable glutathione peroxidase 2 (169 aa).

Cysteine 41 is a catalytic residue.

It belongs to the glutathione peroxidase family. Interacts with DJ1A. As to expression, expressed in leaves, stems, flowers, green siliques and roots.

The protein resides in the cytoplasm. It is found in the cytosol. Its subcellular location is the nucleus. The enzyme catalyses 2 glutathione + H2O2 = glutathione disulfide + 2 H2O. Functionally, may constitute a glutathione peroxidase-like protective system against oxidative stresses. The sequence is that of Probable glutathione peroxidase 2 (GPX2) from Arabidopsis thaliana (Mouse-ear cress).